Reading from the N-terminus, the 567-residue chain is Urease subunit alpha (567 aa).

Residues 129–567 form the Urease domain; the sequence is GGIDSHIHFI…LPMAQRYFLF (439 aa). Ni(2+) contacts are provided by histidine 134, histidine 136, and lysine 217. Lysine 217 carries the N6-carboxylysine modification. Substrate is bound at residue histidine 219. Ni(2+)-binding residues include histidine 246 and histidine 272. Histidine 320 acts as the Proton donor in catalysis. Aspartate 360 contacts Ni(2+).

This sequence belongs to the metallo-dependent hydrolases superfamily. Urease alpha subunit family. As to quaternary structure, heterotrimer of UreA (gamma), UreB (beta) and UreC (alpha) subunits. Three heterotrimers associate to form the active enzyme. Ni cation serves as cofactor. In terms of processing, carboxylation allows a single lysine to coordinate two nickel ions.

The protein localises to the cytoplasm. The enzyme catalyses urea + 2 H2O + H(+) = hydrogencarbonate + 2 NH4(+). It participates in nitrogen metabolism; urea degradation; CO(2) and NH(3) from urea (urease route): step 1/1. The polypeptide is Urease subunit alpha (Tolumonas auensis (strain DSM 9187 / NBRC 110442 / TA 4)).